The chain runs to 313 residues: T-box protein 37 (313 aa).

The segment at residues 19-195 is a DNA-binding region (T-box); the sequence is IWEKFYPKTE…HNKFASGFRS (177 aa). Positions 193–228 are disordered; the sequence is FRSNGKRRLSSESENSENSPPKRSASAISSLTPPAI.

It is found in the nucleus. Transcription factor. Required for mesodermal induction, acting redundantly with transcription factor tbx-38. Together with tbx-38, acts by inducing cell fates in the AB lineage, thereby playing a role in development of the anterior pharynx. The chain is T-box protein 37 (tbx-37) from Caenorhabditis elegans.